The primary structure comprises 199 residues: Recombination protein RecR (199 aa).

A C4-type zinc finger spans residues 57–72; the sequence is CPICGNITEKEICDIC. Residues 80–176 form the Toprim domain; the sequence is TTIMVVEQPK…KVTRLAAGLS (97 aa).

It belongs to the RecR family.

May play a role in DNA repair. It seems to be involved in an RecBC-independent recombinational process of DNA repair. It may act with RecF and RecO. The polypeptide is Recombination protein RecR (Lactobacillus acidophilus (strain ATCC 700396 / NCK56 / N2 / NCFM)).